Here is a 343-residue protein sequence, read N- to C-terminus: Thromboxane A2 receptor (343 aa).

Over 1-29 (MWPNGSSLGPCFRPTNITLEERRLIASPW) the chain is Extracellular. N-linked (GlcNAc...) asparagine glycosylation is found at Asn-4 and Asn-16. The helical transmembrane segment at 30 to 52 (FAASFCVVGLASNLLALSVLAGA) threads the bilayer. Residues 53 to 66 (RQGGSHTRSSFLTF) are Cytoplasmic-facing. Residues 67–87 (LCGLVLTDFLGLLVTGTIVVS) form a helical membrane-spanning segment. At 88-106 (QHAALFEWHAVDPGCRLCR) the chain is on the extracellular side. Cys-105 and Cys-183 are joined by a disulfide. A helical transmembrane segment spans residues 107–128 (FMGVVMIFFGLSPLLLGAAMAS). The Cytoplasmic segment spans residues 129–149 (ERYLGITRPFSRPAVASQRRA). Residues 150–172 (WATVGLVWAAALALGLLPLLGVG) form a helical membrane-spanning segment. Topologically, residues 173 to 193 (RYTVQYPGSWCFLTLGAESGD) are extracellular. Residues 194-219 (VAFGLLFSMLGGLSVGLSFLLNTVSV) traverse the membrane as a helical segment. The Cytoplasmic segment spans residues 220–246 (ATLCHVYHGQEAAQQRPRDSEVEMMAQ). The chain crosses the membrane as a helical span at residues 247–270 (LLGIMVVASVCWLPLLVFIAQTVL). At 271-289 (RNPPAMSPAGQLSRTTEKE) the chain is on the extracellular side. A helical membrane pass occupies residues 290–311 (LLIYLRVATWNQILDPWVYILF). At 312-343 (RRAVLRRLQPRLSTRPRSLSLQPQLTQRSGLQ) the chain is on the cytoplasmic side. A phosphoserine mark is found at Ser-329 and Ser-331.

Belongs to the G-protein coupled receptor 1 family. In terms of assembly, interacts with RPGRIP1L. Interacts with PSMA3. Interacts with RACK1; the interaction regulates TBXA2R cell surface expression.

It is found in the cell membrane. Functionally, receptor for thromboxane A2 (TXA2), a potent stimulator of platelet aggregation. The activity of this receptor is mediated by a G-protein that activates a phosphatidylinositol-calcium second messenger system. In the kidney, the binding of TXA2 to glomerular TP receptors causes intense vasoconstriction. Activates phospholipase C. In terms of biological role, activates adenylyl cyclase. Its function is as follows. Inhibits adenylyl cyclase. The protein is Thromboxane A2 receptor (TBXA2R) of Homo sapiens (Human).